The chain runs to 179 residues: ATP synthase subunit b, chloroplastic (179 aa).

The chain crosses the membrane as a helical span at residues 35–51 (IVILGGGIFKLGSTALS).

This sequence belongs to the ATPase B chain family. In terms of assembly, F-type ATPases have 2 components, F(1) - the catalytic core - and F(0) - the membrane proton channel. F(1) has five subunits: alpha(3), beta(3), gamma(1), delta(1), epsilon(1). F(0) has four main subunits: a(1), b(1), b'(1) and c(10-14). The alpha and beta chains form an alternating ring which encloses part of the gamma chain. F(1) is attached to F(0) by a central stalk formed by the gamma and epsilon chains, while a peripheral stalk is formed by the delta, b and b' chains.

It localises to the plastid. Its subcellular location is the chloroplast thylakoid membrane. In terms of biological role, f(1)F(0) ATP synthase produces ATP from ADP in the presence of a proton or sodium gradient. F-type ATPases consist of two structural domains, F(1) containing the extramembraneous catalytic core and F(0) containing the membrane proton channel, linked together by a central stalk and a peripheral stalk. During catalysis, ATP synthesis in the catalytic domain of F(1) is coupled via a rotary mechanism of the central stalk subunits to proton translocation. Functionally, component of the F(0) channel, it forms part of the peripheral stalk, linking F(1) to F(0). This Emiliania huxleyi (Coccolithophore) protein is ATP synthase subunit b, chloroplastic.